We begin with the raw amino-acid sequence, 628 residues long: 2-oxoacid:ferredoxin oxidoreductase 2, subunit alpha (628 aa).

Positions tyrosine 254–proline 258 match the YPITP motif motif. Substrate-binding residues include threonine 257 and arginine 344.

In terms of assembly, heterodimer composed of an alpha and a beta subunit.

The enzyme catalyses a 2-oxocarboxylate + 2 oxidized [2Fe-2S]-[ferredoxin] + CoA = an acyl-CoA + 2 reduced [2Fe-2S]-[ferredoxin] + CO2 + H(+). In terms of biological role, catalyzes the coenzyme A-dependent oxidative decarboxylation of different 2-oxoacids such as 2-oxoglutarate, pyruvate and 2-oxobutyrate to form their CoA derivatives. The chain is 2-oxoacid:ferredoxin oxidoreductase 2, subunit alpha from Sulfurisphaera tokodaii (strain DSM 16993 / JCM 10545 / NBRC 100140 / 7) (Sulfolobus tokodaii).